The primary structure comprises 758 residues: Ribosomal RNA processing protein 1 homolog B (758 aa).

Ser-245 bears the Phosphoserine mark. The segment covering 259–272 (AVSKKKTALGKNHS) has biased composition (basic residues). The tract at residues 259 to 285 (AVSKKKTALGKNHSRKDGLSDERGRDD) is disordered. Residues 273 to 285 (RKDGLSDERGRDD) are compositionally biased toward basic and acidic residues. Phosphoserine occurs at positions 350, 392, 394, and 395. The disordered stretch occupies residues 381-598 (GSRVFCVEEE…KTASLKKRKK (218 aa)). The segment covering 397–408 (QKRRRKKKKKHH) has biased composition (basic residues). Positions 447 to 457 (GAEATSSTGEE) are enriched in low complexity. 2 positions are modified to phosphoserine: Ser-452 and Ser-458. Residues 469 to 481 (HNKRKRPRKKSPR) show a composition bias toward basic residues. A compositionally biased stretch (low complexity) spans 498-513 (SQSGPSGSHPQGPRGS). The residue at position 513 (Ser-513) is a Phosphoserine. A compositionally biased stretch (basic residues) spans 566–575 (QRRRLQKKKA). Position 579 is a phosphoserine (Ser-579). N6-acetyllysine is present on Lys-652. The interval 660 to 681 (KSSTATHPPGPAVQLNKTPSSS) is disordered. Ser-702 and Ser-706 each carry phosphoserine. The tract at residues 707–758 (PTGPSRVAFDPEQKPLHGVLKTPTSSPASSPLVAKKPLTTTPRRRPRAMDFF) is disordered. Position 712 is a citrulline (Arg-712). Thr-728 carries the post-translational modification Phosphothreonine. Phosphoserine is present on residues Ser-732, Ser-735, and Ser-736.

This sequence belongs to the RRP1 family. As to quaternary structure, interacts with the transcriptional activator E2F1. Interacts with serine/threonine-protein phosphatase PP1 subunits PPP1CB and PPP1CC but not with PPP1CA. Interacts with 60S ribosomal proteins RPL5 and RPL27, ribosomal processing protein RRP1/NNP1 and other nucleolar proteins including NOP2/NOL1 and FBL. Also interacts with nucleolar protein NPM1/B23. Interacts with splicing factor SRSF1 and with LUC7L3/CROP. Interacts with GTPase activator SIPA1. Interacts with CBX5/HP1alpha, H1-10, NCL, PARP1, TRIM28 and YBX3. (Microbial infection) Interacts with influenza A virus nucleoprotein NP and with RNA-directed RNA polymerase subunits PB1 and PB2. Post-translationally, citrullinated by PADI4.

Its subcellular location is the nucleus. The protein resides in the nucleolus. It is found in the nucleoplasm. It localises to the chromosome. Functionally, positively regulates DNA damage-induced apoptosis by acting as a transcriptional coactivator of proapoptotic target genes of the transcriptional activator E2F1. Likely to play a role in ribosome biogenesis by targeting serine/threonine protein phosphatase PP1 to the nucleolus. Involved in regulation of mRNA splicing. Inhibits SIPA1 GTPase activity. Involved in regulating expression of extracellular matrix genes. Associates with chromatin and may play a role in modulating chromatin structure. Its function is as follows. (Microbial infection) Following influenza A virus (IAV) infection, promotes viral mRNA transcription by facilitating the binding of IAV RNA-directed RNA polymerase to capped mRNA. This chain is Ribosomal RNA processing protein 1 homolog B (RRP1B), found in Homo sapiens (Human).